A 66-amino-acid polypeptide reads, in one-letter code: MNILKLFFVFIVAMSLVSCSTAAPAKIPIKAIKTVGKAVGKGLRAINIASTANDVFNFLKPKKRKH.

Residues Met-1–Pro-24 form the signal peptide.

In terms of tissue distribution, expressed in fat body and to a lesser extent in hemocyte and Malpighian tubules.

It is found in the secreted. Its function is as follows. Has antibacterial activity against Gram-positive and Gram-negative bacteria. Probably acts by disturbing membrane functions with its amphipathic structure. This is Moricin-2 (MOR2) from Bombyx mori (Silk moth).